A 321-amino-acid chain; its full sequence is Transmembrane and ubiquitin-like domain-containing protein 2 (321 aa).

Residues 36-56 (VMVVAGVVVLILALVLAWLST) form a helical membrane-spanning segment. Disordered regions lie at residues 87-131 (LVAG…GGVE) and 145-170 (KRQA…LPPS). Residues 104–120 (EGNDEKAEEAGEGRGDS) show a composition bias toward basic and acidic residues. Positions 174–247 (ITVRLKFLND…IHCHRSPPGS (74 aa)) constitute a Ubiquitin-like domain. Transmembrane regions (helical) follow at residues 266 to 286 (LGVN…GVVW) and 295 to 315 (FFTA…SFLV).

It localises to the membrane. This is Transmembrane and ubiquitin-like domain-containing protein 2 (TMUB2) from Homo sapiens (Human).